The sequence spans 187 residues: Ribosome-recycling factor (187 aa).

It belongs to the RRF family.

It localises to the cytoplasm. Its function is as follows. Responsible for the release of ribosomes from messenger RNA at the termination of protein biosynthesis. May increase the efficiency of translation by recycling ribosomes from one round of translation to another. The polypeptide is Ribosome-recycling factor (Ruegeria pomeroyi (strain ATCC 700808 / DSM 15171 / DSS-3) (Silicibacter pomeroyi)).